A 152-amino-acid chain; its full sequence is MANCERTFIAIKPDGVQRGLVGEIIKRFEQKGFRLVGLKFMQASEDLLKEHYVDLKDRPFFAGLVKYMHSGPVVAMVWEGLNVVKTGRVMLGETNPADSKPGTIRGDFCIQVGRNIIHGSDSVESAEKEIGLWFHPEELVDYTSCAQNWIYE.

Residues Lys-12, Phe-60, Arg-88, and Thr-94 each contribute to the ATP site. Lys-100 participates in a covalent cross-link: Glycyl lysine isopeptide (Lys-Gly) (interchain with G-Cter in ubiquitin). Residues Arg-105 and Asn-115 each contribute to the ATP site. His-118 (pros-phosphohistidine intermediate) is an active-site residue. Phosphoserine occurs at positions 120, 122, and 125.

The protein belongs to the NDK family. As to quaternary structure, hexamer of two different chains: An and B (A6, A5B, A4B2, A3B3, A2B4, AB5, B6). Interacts with PRUNE1. Component of the SET complex, composed of at least ANP32A, APEX1, HMGB2, NME1, SET and TREX1. Within this complex, interacts directly with SET. Also interacts with TREX1, but only following translocation to the nucleus. The cofactor is Mg(2+). In terms of tissue distribution, isoform 1 is expressed in heart, brain, placenta, lung, liver, skeletal muscle, pancreas, spleen and thymus. Expressed in lung carcinoma cell lines but not in normal lung tissues. Isoform 2 is ubiquitously expressed and its expression is also related to tumor differentiation.

The protein localises to the cytoplasm. It is found in the nucleus. The enzyme catalyses a 2'-deoxyribonucleoside 5'-diphosphate + ATP = a 2'-deoxyribonucleoside 5'-triphosphate + ADP. It carries out the reaction a ribonucleoside 5'-diphosphate + ATP = a ribonucleoside 5'-triphosphate + ADP. Its activity is regulated as follows. Autophosphorylation at His-118 increases serine/threonine protein kinase activity of the enzyme. Interaction with the SET complex inhibits the endonuclease activity. Its function is as follows. Major role in the synthesis of nucleoside triphosphates other than ATP. The ATP gamma phosphate is transferred to the NDP beta phosphate via a ping-pong mechanism, using a phosphorylated active-site intermediate. Possesses nucleoside-diphosphate kinase, serine/threonine-specific protein kinase, geranyl and farnesyl pyrophosphate kinase, histidine protein kinase and 3'-5' exonuclease activities. Involved in cell proliferation, differentiation and development, signal transduction, G protein-coupled receptor endocytosis, and gene expression. Required for neural development including neural patterning and cell fate determination. During GZMA-mediated cell death, works in concert with TREX1. NME1 nicks one strand of DNA and TREX1 removes bases from the free 3' end to enhance DNA damage and prevent DNA end reannealing and rapid repair. In Homo sapiens (Human), this protein is Nucleoside diphosphate kinase A (NME1).